The primary structure comprises 397 residues: Tryptophan synthase beta chain (397 aa).

An N6-(pyridoxal phosphate)lysine modification is found at Lys87.

The protein belongs to the TrpB family. Tetramer of two alpha and two beta chains. It depends on pyridoxal 5'-phosphate as a cofactor.

It catalyses the reaction (1S,2R)-1-C-(indol-3-yl)glycerol 3-phosphate + L-serine = D-glyceraldehyde 3-phosphate + L-tryptophan + H2O. The protein operates within amino-acid biosynthesis; L-tryptophan biosynthesis; L-tryptophan from chorismate: step 5/5. The beta subunit is responsible for the synthesis of L-tryptophan from indole and L-serine. In Cronobacter sakazakii (strain ATCC BAA-894) (Enterobacter sakazakii), this protein is Tryptophan synthase beta chain.